A 550-amino-acid polypeptide reads, in one-letter code: Methyl-coenzyme M reductase subunit alpha (550 aa).

Glutamine 147 contacts coenzyme F430. Coenzyme B is bound by residues arginine 225, 256 to 257 (KH), and arginine 270. Histidine 257 bears the Pros-methylhistidine mark. Arginine 271 carries the post-translational modification 5-methylarginine. Tyrosine 333 serves as a coordination point for coenzyme M. Glutamine 400 carries the 2-methylglutamine modification. Tyrosine 444 serves as a coordination point for coenzyme M. Position 445 is a 1-thioglycine (glycine 445). Position 450 is a (Z)-2,3-didehydroaspartate (aspartate 450). An S-methylcysteine modification is found at cysteine 452.

The protein belongs to the methyl-coenzyme M reductase alpha subunit family. As to quaternary structure, MCR is a hexamer of two alpha, two beta, and two gamma chains, forming a dimer of heterotrimers. Requires coenzyme F430 as cofactor. In terms of processing, the alpha subunit contains six modified amino acids near the active site region. Is methylated on His-257, Arg-271, Gln-400 and Cys-452, probably by the action of specific S-adenosylmethionine-dependent methyltransferases. Also contains a thioglycine at position 445, forming a thiopeptide bond. Contains a didehydroaspartate residue at position 450. The methylation on C5 of Arg-271 is a post-translational methylation not essential in vivo, but which plays a role for the stability and structural integrity of MCR.

It localises to the cytoplasm. The catalysed reaction is coenzyme B + methyl-coenzyme M = methane + coenzyme M-coenzyme B heterodisulfide. It participates in one-carbon metabolism; methyl-coenzyme M reduction; methane from methyl-coenzyme M: step 1/1. In terms of biological role, component of the methyl-coenzyme M reductase (MCR) I that catalyzes the reductive cleavage of methyl-coenzyme M (CoM-S-CH3 or 2-(methylthio)ethanesulfonate) using coenzyme B (CoB or 7-mercaptoheptanoylthreonine phosphate) as reductant which results in the production of methane and the mixed heterodisulfide of CoB and CoM (CoM-S-S-CoB). This is the final step in methanogenesis. In Methanothermobacter thermautotrophicus (strain ATCC 29096 / DSM 1053 / JCM 10044 / NBRC 100330 / Delta H) (Methanobacterium thermoautotrophicum), this protein is Methyl-coenzyme M reductase subunit alpha (mcrA).